The following is a 281-amino-acid chain: Arylamine N-acetyltransferase / N-hydroxyarylamine O-acetyltransferase (281 aa).

Residue Cys69 is the Acyl-thioester intermediate of the active site. Catalysis depends on residues His107 and Asp122.

The protein belongs to the arylamine N-acetyltransferase family. As to quaternary structure, monomer and homodimer.

The protein resides in the cytoplasm. The enzyme catalyses an arylamine + acetyl-CoA = an N-acetylarylamine + CoA. The catalysed reaction is an N-hydroxyarylamine + acetyl-CoA = an N-acetoxyarylamine + CoA. With respect to regulation, inhibited by N-ethylmaleimide and iodoacetamide. Its function is as follows. Catalyzes both the acetyl-CoA-dependent N-acetylation of aromatic amines and the O-acetylation of N-hydroxyarylamines. In vitro, catalyzes the O-acetylation of N-hydroxy-Glu-P-1, and the N-acetylation of isoniazid and 2-aminofluorene. This chain is Arylamine N-acetyltransferase / N-hydroxyarylamine O-acetyltransferase (nhoA), found in Salmonella typhimurium (strain LT2 / SGSC1412 / ATCC 700720).